The chain runs to 309 residues: Ornithine carbamoyltransferase (309 aa).

Carbamoyl phosphate is bound by residues 51 to 54 (STRT), Gln78, Arg102, and 129 to 132 (HPVQ). L-ornithine is bound by residues Asn160, Asp224, and 228–229 (SM). Carbamoyl phosphate is bound by residues 264–265 (CL) and Arg292.

It belongs to the aspartate/ornithine carbamoyltransferase superfamily. OTCase family.

It localises to the cytoplasm. The enzyme catalyses carbamoyl phosphate + L-ornithine = L-citrulline + phosphate + H(+). The protein operates within amino-acid biosynthesis; L-arginine biosynthesis; L-arginine from L-ornithine and carbamoyl phosphate: step 1/3. Reversibly catalyzes the transfer of the carbamoyl group from carbamoyl phosphate (CP) to the N(epsilon) atom of ornithine (ORN) to produce L-citrulline. This chain is Ornithine carbamoyltransferase, found in Campylobacter fetus subsp. fetus (strain 82-40).